Consider the following 197-residue polypeptide: Putative AgrB-like protein (197 aa).

4 helical membrane-spanning segments follow: residues 29–49, 79–99, 102–122, and 143–163; these read FGFT…AVGL, SIGC…VPFA, YAWI…APYY, and ILIV…LVLG.

This sequence belongs to the AgrB family.

It localises to the cell membrane. May be involved in the proteolytic processing of a quorum sensing system signal molecule precursor. This chain is Putative AgrB-like protein, found in Halalkalibacterium halodurans (strain ATCC BAA-125 / DSM 18197 / FERM 7344 / JCM 9153 / C-125) (Bacillus halodurans).